Consider the following 419-residue polypeptide: RING finger protein 150 (419 aa).

A signal peptide spans 1-34 (MALSVIQACRSLALSTWLLSFCFVHLLCLDFTVA). Residues 35 to 197 (EKEEWYTAFV…NLQKYVSRTS (163 aa)) are Extracellular-facing. Residues 70-172 (SLKREARGVL…PKGRELVLLM (103 aa)) enclose the PA domain. The helical transmembrane segment at 198–218 (VVFVSISFIILMIISLAWLVF) threads the bilayer. Over 219–419 (YYIQRFRYAN…IDTPTDDPKC (201 aa)) the chain is Cytoplasmic. Residues 267–308 (CAVCIEGYKPNDVVRILPCRHLFHKCCVDPWLVDHRTCPMCK) form an RING-type; atypical zinc finger. The interval 374 to 419 (SEPLSQDTMPTEQSELQPIASGSSDVSLTTGAGHSDIDTPTDDPKC) is disordered. A compositionally biased stretch (polar residues) spans 376 to 405 (PLSQDTMPTEQSELQPIASGSSDVSLTTGA).

It localises to the membrane. The sequence is that of RING finger protein 150 (rnf150) from Danio rerio (Zebrafish).